Consider the following 118-residue polypeptide: Light-harvesting protein B-800/850 gamma chain (118 aa).

In terms of biological role, seems to be required for the LH-II stabilization. In Rhodobacter capsulatus (Rhodopseudomonas capsulata), this protein is Light-harvesting protein B-800/850 gamma chain (pucE).